The following is a 321-amino-acid chain: L-carnitine dehydrogenase (321 aa).

14 to 19 is a binding site for NAD(+); sequence GSGVIG.

Belongs to the 3-hydroxyacyl-CoA dehydrogenase family. L-carnitine dehydrogenase subfamily. As to quaternary structure, homodimer.

The protein localises to the cytoplasm. The catalysed reaction is carnitine + NAD(+) = 3-dehydrocarnitine + NADH + H(+). It participates in amine and polyamine metabolism; carnitine metabolism. With respect to regulation, analogs of L-carnitine such as D-carnitine, glycine betaine and choline, are competitive inhibitors of L-carnitine oxidation. Catalyzes the NAD(+)-dependent oxidation of L-carnitine to 3-dehydrocarnitine. Is specific for L-carnitine and NAD(+) as substrates. D,L-3-hydroxybutyrate, L-lactate, ethanol, L-malate and D,L-isocitrate are not substrates. Is involved in a L-carnitine degradation pathway that allows P.aeruginosa to grow on L-carnitine as the sole source of carbon and nitrogen. The sequence is that of L-carnitine dehydrogenase from Pseudomonas aeruginosa (strain ATCC 15692 / DSM 22644 / CIP 104116 / JCM 14847 / LMG 12228 / 1C / PRS 101 / PAO1).